Reading from the N-terminus, the 169-residue chain is Caltractin (169 aa).

The interval 1 to 24 (MSYRKTVVSARRDQKKGRVGGLTE) is disordered. EF-hand domains lie at 25 to 60 (EQKQ…LGFE), 61 to 96 (PKKE…KMGE), 98 to 133 (DSRE…LGEN), and 134 to 169 (LTDE…TSLF). Residues Asp38, Asp40, Ser42, Thr44, and Glu49 each coordinate Ca(2+). Ca(2+) contacts are provided by Asp147, Asn149, Asp151, Gln153, and Glu158.

Belongs to the centrin family.

Its function is as follows. This calcium-binding protein is found in the basal body complexes (the functional homolog of the centrosome in animal cell). In mitotic cells it is specifically associated with the poles of the mitotic spindles at the sites of the duplicated basal body complexes. This chain is Caltractin, found in Dunaliella salina (Green alga).